The chain runs to 133 residues: Small ribosomal subunit protein uS9 (133 aa).

Residues 101–133 (MKPKGLLTRDPREVERKKYGLKKARRAPQFSKR) are disordered. Positions 107–118 (LTRDPREVERKK) are enriched in basic and acidic residues. Over residues 119–133 (YGLKKARRAPQFSKR) the composition is skewed to basic residues.

It belongs to the universal ribosomal protein uS9 family.

This is Small ribosomal subunit protein uS9 from Deinococcus radiodurans (strain ATCC 13939 / DSM 20539 / JCM 16871 / CCUG 27074 / LMG 4051 / NBRC 15346 / NCIMB 9279 / VKM B-1422 / R1).